The primary structure comprises 193 residues: Xanthine phosphoribosyltransferase (193 aa).

The xanthine site is built by Leu20 and Thr27. 128–132 contacts 5-phospho-alpha-D-ribose 1-diphosphate; the sequence is ANGQA. A xanthine-binding site is contributed by Lys156.

This sequence belongs to the purine/pyrimidine phosphoribosyltransferase family. Xpt subfamily. As to quaternary structure, homodimer.

The protein localises to the cytoplasm. It carries out the reaction XMP + diphosphate = xanthine + 5-phospho-alpha-D-ribose 1-diphosphate. It participates in purine metabolism; XMP biosynthesis via salvage pathway; XMP from xanthine: step 1/1. Its function is as follows. Converts the preformed base xanthine, a product of nucleic acid breakdown, to xanthosine 5'-monophosphate (XMP), so it can be reused for RNA or DNA synthesis. The sequence is that of Xanthine phosphoribosyltransferase from Streptococcus pyogenes serotype M3 (strain ATCC BAA-595 / MGAS315).